The sequence spans 359 residues: Histidinol-phosphate aminotransferase (359 aa).

Lys-217 carries the N6-(pyridoxal phosphate)lysine modification.

Belongs to the class-II pyridoxal-phosphate-dependent aminotransferase family. Histidinol-phosphate aminotransferase subfamily. Homodimer. The cofactor is pyridoxal 5'-phosphate.

It carries out the reaction L-histidinol phosphate + 2-oxoglutarate = 3-(imidazol-4-yl)-2-oxopropyl phosphate + L-glutamate. The protein operates within amino-acid biosynthesis; L-histidine biosynthesis; L-histidine from 5-phospho-alpha-D-ribose 1-diphosphate: step 7/9. This is Histidinol-phosphate aminotransferase from Salmonella choleraesuis (strain SC-B67).